A 312-amino-acid polypeptide reads, in one-letter code: Glycerol-3-phosphate dehydrogenase [NAD(P)+] (312 aa).

Trp-11, Arg-30, Arg-31, and Lys-95 together coordinate NADPH. Sn-glycerol 3-phosphate-binding residues include Lys-95, Gly-123, and Ser-125. Ala-127 serves as a coordination point for NADPH. 5 residues coordinate sn-glycerol 3-phosphate: Lys-177, Asp-230, Ser-240, Arg-241, and Asn-242. Catalysis depends on Lys-177, which acts as the Proton acceptor. Arg-241 contacts NADPH. Val-265 and Glu-267 together coordinate NADPH.

Belongs to the NAD-dependent glycerol-3-phosphate dehydrogenase family.

The protein localises to the cytoplasm. It carries out the reaction sn-glycerol 3-phosphate + NAD(+) = dihydroxyacetone phosphate + NADH + H(+). The catalysed reaction is sn-glycerol 3-phosphate + NADP(+) = dihydroxyacetone phosphate + NADPH + H(+). Its pathway is membrane lipid metabolism; glycerophospholipid metabolism. Functionally, catalyzes the reduction of the glycolytic intermediate dihydroxyacetone phosphate (DHAP) to sn-glycerol 3-phosphate (G3P), the key precursor for phospholipid synthesis. The protein is Glycerol-3-phosphate dehydrogenase [NAD(P)+] of Helicobacter pylori (strain P12).